The primary structure comprises 469 residues: Spermatogenesis-associated protein 21 (469 aa).

Disordered regions lie at residues 1 to 76 (MDNR…AGTQ) and 99 to 157 (HRRA…MGAP). Positions 49 to 61 (EVRDIGERREPDR) are enriched in basic and acidic residues. Low complexity predominate over residues 62–73 (AQQQPQKPAVAA). Positions 105–132 (ARSQTAQKSPRTLTPVPTSAPSLPQTPA) are enriched in polar residues. Positions 146–157 (APGPEPAPMGAP) are enriched in pro residues. A coiled-coil region spans residues 198–225 (EPEEQSLQKLYQNREKSEEQLTLKQEEA). The region spanning 255–290 (VTLAQVEDALMSADVNGDGRVDFKDFLAVMTDTRRF) is the EF-hand domain. Positions 268, 270, 272, 274, and 279 each coordinate Ca(2+). The tract at residues 424 to 469 (YALDQCTPPGLDPDIRSPFFQSGSQGNREHNSDSRKWLSSVPARTH) is disordered. The segment covering 450–459 (NREHNSDSRK) has biased composition (basic and acidic residues).

In terms of biological role, involved in the differentiation of haploid spermatids. This Homo sapiens (Human) protein is Spermatogenesis-associated protein 21 (SPATA21).